Reading from the N-terminus, the 720-residue chain is Polyribonucleotide nucleotidyltransferase (720 aa).

Mg(2+) contacts are provided by Asp484 and Asp490. Residues 551–610 enclose the KH domain; sequence PRMYKINIDPSKIGSVIGSGGKTIRSIIEQTNTTVDIENDGTVVIGATDEASAKKAIKII. The region spanning 620 to 688 is the S1 motif domain; it reads GSIYTGKVTR…NQGRVNLSHR (69 aa). The disordered stretch occupies residues 697 to 720; it reads PISRNRDSQPRRPGPFRPSDRSNS.

The protein belongs to the polyribonucleotide nucleotidyltransferase family. The cofactor is Mg(2+).

The protein resides in the cytoplasm. The catalysed reaction is RNA(n+1) + phosphate = RNA(n) + a ribonucleoside 5'-diphosphate. Functionally, involved in mRNA degradation. Catalyzes the phosphorolysis of single-stranded polyribonucleotides processively in the 3'- to 5'-direction. The chain is Polyribonucleotide nucleotidyltransferase from Dehalococcoides mccartyi (strain CBDB1).